We begin with the raw amino-acid sequence, 734 residues long: Photosystem I P700 chlorophyll a apoprotein A2 (734 aa).

The next 8 membrane-spanning stretches (helical) occupy residues I46–A69, L135–Q158, L175–I199, I273–Y291, I330–Y353, A369–I395, A417–H439, and F517–V535. C559 and C568 together coordinate [4Fe-4S] cluster. A run of 2 helical transmembrane segments spans residues A575–W596 and L643–I665. Residues H654, M662, and Y670 each contribute to the chlorophyll a site. W671 provides a ligand contact to phylloquinone. A helical membrane pass occupies residues L707 to A727.

This sequence belongs to the PsaA/PsaB family. In terms of assembly, the PsaA/B heterodimer binds the P700 chlorophyll special pair and subsequent electron acceptors. PSI consists of a core antenna complex that captures photons, and an electron transfer chain that converts photonic excitation into a charge separation. The eukaryotic PSI reaction center is composed of at least 11 subunits. P700 is a chlorophyll a/chlorophyll a' dimer, A0 is one or more chlorophyll a, A1 is one or both phylloquinones and FX is a shared 4Fe-4S iron-sulfur center. is required as a cofactor.

The protein resides in the plastid. It is found in the chloroplast thylakoid membrane. The enzyme catalyses reduced [plastocyanin] + hnu + oxidized [2Fe-2S]-[ferredoxin] = oxidized [plastocyanin] + reduced [2Fe-2S]-[ferredoxin]. Functionally, psaA and PsaB bind P700, the primary electron donor of photosystem I (PSI), as well as the electron acceptors A0, A1 and FX. PSI is a plastocyanin-ferredoxin oxidoreductase, converting photonic excitation into a charge separation, which transfers an electron from the donor P700 chlorophyll pair to the spectroscopically characterized acceptors A0, A1, FX, FA and FB in turn. Oxidized P700 is reduced on the lumenal side of the thylakoid membrane by plastocyanin. The protein is Photosystem I P700 chlorophyll a apoprotein A2 of Oryza sativa (Rice).